The sequence spans 557 residues: Ras-specific guanine nucleotide-releasing factor RalGPS2 (557 aa).

The Ras-GEF domain occupies 49 to 287 (TPEEYAGQIT…YKLSLKIEPG (239 aa)). The tract at residues 283-314 (KIEPGTSTPRSAASREDLVGPEVGASPQSGRK) is disordered. Phosphoserine is present on residues Ser-293, Ser-296, Ser-308, and Ser-311. Phosphothreonine is present on Thr-326. Residues 327-330 (PPSP) carry the PXXP motif. Phosphoserine occurs at positions 329 and 343. Position 361 is a phosphothreonine (Thr-361). Residues 368–409 (RHLLDDSVMEPHAPSRGQAESSTLSSGISIGSSDGSELSEET) are disordered. Ser-374 is modified (phosphoserine). Low complexity predominate over residues 387 to 403 (ESSTLSSGISIGSSDGS). The 113-residue stretch at 431 to 543 (AVTIQGVLRR…WFKHLSAACQ (113 aa)) folds into the PH domain. A required for stimulation of nucleotide exchange by RALA region spans residues 433–557 (TIQGVLRRKT…QVPTNLMTFE (125 aa)).

Interacts with the SH3 domains of GRB2 and PLCG1. Interacts with RALA.

Its subcellular location is the cytoplasm. It localises to the cell membrane. Its function is as follows. Guanine nucleotide exchange factor for the small GTPase RALA. May be involved in cytoskeletal organization. May also be involved in the stimulation of transcription in a Ras-independent fashion. This is Ras-specific guanine nucleotide-releasing factor RalGPS2 (RALGPS2) from Macaca fascicularis (Crab-eating macaque).